Here is a 795-residue protein sequence, read N- to C-terminus: Phenylalanine--tRNA ligase beta subunit (795 aa).

The 110-residue stretch at 39–148 (AGSFHGVVVG…ADAPIGTDIR (110 aa)) folds into the tRNA-binding domain. The region spanning 401 to 476 (PKRATITLRR…RVYGYNNIPD (76 aa)) is the B5 domain. 4 residues coordinate Mg(2+): aspartate 454, aspartate 460, glutamate 463, and glutamate 464. The region spanning 701–794 (SRFPANRRDI…LKERFQASLR (94 aa)) is the FDX-ACB domain.

Belongs to the phenylalanyl-tRNA synthetase beta subunit family. Type 1 subfamily. As to quaternary structure, tetramer of two alpha and two beta subunits. It depends on Mg(2+) as a cofactor.

The protein localises to the cytoplasm. It carries out the reaction tRNA(Phe) + L-phenylalanine + ATP = L-phenylalanyl-tRNA(Phe) + AMP + diphosphate + H(+). This chain is Phenylalanine--tRNA ligase beta subunit, found in Shigella dysenteriae serotype 1 (strain Sd197).